The following is a 595-amino-acid chain: MNSNKEETTADGSVSTTEEQQQQQQPQQQEQINTTTASTTSNGENTASDNNNNSNNNNNNNTNNTNTNNNCDISMTEDNSKEEDTGIKVIGEGELWGKLISLNPTYPTIEIRQDSIILGRSKGVCNYTFTSPTVSGKHCKIYRDPTVKSRNVAFVDDTSTNGTFINNEVIGKGSKILIENGCEISVIPKKGSEKISFIYQDCFEEQKEMEQGGPQQKYDLREVLGTGNFASVRLGVEKETGNKYAIKIIDKKKMSMTSKRKDSLMDEVNVLTKVKHQNIISIKEVFETQKNLYLVLELVTGGELFDKIVSERKFQEDTCRYILKQLCDSVRYLHSNGIAHRDLKPENILLATPNSFLLKISDFGLSRAMDEGTYMKTMCGTPQYVAPEILTKGEREGYGKSVDLWSIGVITYILLCGFPPFGDPQTKDFFEKIKNGGFSFPSPYWDEISDEAKSLIKNLIKVDVEKRFTIDQALNHPWFTNHEEKTKEFYEKDKLEFPPPSTNDDHQPTPNTTSSNSQLVPESKCDQIQDNTTDNNNNNNNNNNNNNNNNNNNTTNNSNNIDNNNGNDESKSSKKRQLSEDSNINDEHEQKKVKN.

A disordered region spans residues 1-84 (MNSNKEETTA…MTEDNSKEED (84 aa)). Over residues 18–31 (EEQQQQQQPQQQEQ) the composition is skewed to low complexity. Residues 32–49 (INTTTASTTSNGENTASD) are compositionally biased toward polar residues. Residues 50-70 (NNNNSNNNNNNNTNNTNTNNN) show a composition bias toward low complexity. Residues 116 to 170 (IILGRSKGVCNYTFTSPTVSGKHCKIYRDPTVKSRNVAFVDDTSTNGTFINNEVI) form the FHA domain. Positions 218-479 (YDLREVLGTG…IDQALNHPWF (262 aa)) constitute a Protein kinase domain. Residues 224 to 232 (LGTGNFASV) and lysine 247 contribute to the ATP site. Aspartate 342 serves as the catalytic Proton acceptor. Threonine 377 bears the Phosphothreonine; by autocatalysis mark. The disordered stretch occupies residues 494–595 (KLEFPPPSTN…DEHEQKKVKN (102 aa)). Polar residues predominate over residues 508 to 520 (PTPNTTSSNSQLV). Residues 530–567 (DNTTDNNNNNNNNNNNNNNNNNNNTTNNSNNIDNNNGN) are compositionally biased toward low complexity. Residues 585-595 (NDEHEQKKVKN) are compositionally biased toward basic and acidic residues.

It belongs to the protein kinase superfamily. CAMK Ser/Thr protein kinase family. CHK2 subfamily.

It carries out the reaction L-seryl-[protein] + ATP = O-phospho-L-seryl-[protein] + ADP + H(+). The enzyme catalyses L-threonyl-[protein] + ATP = O-phospho-L-threonyl-[protein] + ADP + H(+). The sequence is that of Probable serine/threonine-protein kinase fhkC (fhkC) from Dictyostelium discoideum (Social amoeba).